Here is a 1086-residue protein sequence, read N- to C-terminus: Endo-1,4-beta-xylanase C (1086 aa).

A signal peptide spans 1–31 (MRGKWLRLCLAAVLIVSLLPGLGAGEWKASA). 2 CBM-cenC domains span residues 35-183 (GDIL…IRLV) and 197-359 (GQAL…ITAT). The GH10 domain occupies 365 to 710 (EKNIPDLAKK…KPAYWALVDP (346 aa)). Residue glutamate 502 is the Proton donor of the active site. The active site involves aspartate 556. Residue glutamate 620 is the Nucleophile of the active site.

This sequence belongs to the glycosyl hydrolase 10 (cellulase F) family.

The catalysed reaction is Endohydrolysis of (1-&gt;4)-beta-D-xylosidic linkages in xylans.. Its pathway is glycan degradation; xylan degradation. Endoxylanase with high hydrolytic activity on birchwood and oat spelt xylan. Xylotetraose, xylotriose, xylobiose and xylose are the main products from birchwood xylan hydrolysis. Shows increasing activity on xylo-oligosaccharides of increasing length. Displays very low hydrolytic activity on Avicel, carboxymethylcellulose (CMC) and p-nitrophenyl-beta-xylopyranoside. Also shows transxylosidase activity, allowing the formation of xylo-oligosaccharides of higher degree of polymerization than the starting substrate. This chain is Endo-1,4-beta-xylanase C (xynC), found in Paenibacillus barcinonensis.